A 99-amino-acid chain; its full sequence is Acylphosphatase-1 (99 aa).

Position 2 is an N-acetylalanine (A2). Residues 9 to 99 (SVDYEIFGKV…LDYSDFQIVK (91 aa)) form the Acylphosphatase-like domain. Catalysis depends on residues R24 and N42.

It belongs to the acylphosphatase family.

It carries out the reaction an acyl phosphate + H2O = a carboxylate + phosphate + H(+). The sequence is that of Acylphosphatase-1 (Acyp1) from Mus musculus (Mouse).